A 530-amino-acid chain; its full sequence is Autoinducer-2 kinase (530 aa).

It belongs to the FGGY kinase family.

The protein localises to the cytoplasm. It catalyses the reaction (S)-4,5-dihydroxypentane-2,3-dione + ATP = (2S)-2-hydroxy-3,4-dioxopentyl phosphate + ADP + H(+). Functionally, catalyzes the phosphorylation of autoinducer-2 (AI-2) to phospho-AI-2, which subsequently inactivates the transcriptional regulator LsrR and leads to the transcription of the lsr operon. Phosphorylates the ring-open form of (S)-4,5-dihydroxypentane-2,3-dione (DPD), which is the precursor to all AI-2 signaling molecules, at the C5 position. The chain is Autoinducer-2 kinase from Escherichia coli O139:H28 (strain E24377A / ETEC).